The sequence spans 2036 residues: Transmembrane channel-like protein (2036 aa).

Disordered stretches follow at residues 1–178 (MQND…IDDE) and 194–243 (SVRG…ESTQ). Over 1–353 (MQNDEEPAAA…GVASYFTFLR (353 aa)) the chain is Cytoplasmic. Residues 58-73 (VGSSSSNGNTSNVATG) are compositionally biased toward low complexity. A compositionally biased stretch (polar residues) spans 74–90 (ANSENNSGVTSPHQLSV). Residues 125–134 (ASQEDHRSYE) are compositionally biased toward basic and acidic residues. The span at 166 to 178 (FDEDGGGGDIDDE) shows a compositional bias: acidic residues. Residues 198-208 (YRGKRGSRSSR) show a composition bias toward basic residues. A compositionally biased stretch (basic and acidic residues) spans 216 to 225 (HVLDSVERRR). Positions 227–243 (SVYTTSSEEGTNQESTQ) are enriched in polar residues. Residues 354–374 (WLMWVNIMIAIPLVAFVIGPE) form a helical membrane-spanning segment. The Extracellular segment spans residues 375–395 (YFATKHGETDPRKRMSDPEAR). A helical transmembrane segment spans residues 396–418 (VAGNLFTFWEFEGYLKYSPMFYG). Over 419–432 (YYSSTSGISTSGYK) the chain is Cytoplasmic. Residues 433–453 (LPLAYFLTAVLVYIYSFVATL) form a helical membrane-spanning segment. Topologically, residues 454–526 (RKMAENSRNS…NRNWRVILQR (73 aa)) are extracellular. The helical transmembrane segment at 527 to 547 (ILVNILVMGLLGLSGATVVLL) threads the bilayer. Residues 548–567 (VNHSEDLAKHDNWLSRNAVN) lie on the Cytoplasmic side of the membrane. The chain crosses the membrane as a helical span at residues 568 to 588 (VTMTLLSFFLPMIFEALGLFE). The Extracellular segment spans residues 589–599 (NWHPRQQLRLQ). The chain crosses the membrane as a helical span at residues 600–620 (LARIMILNMLNLYSLMFSFIY). At 621-1308 (KINSKEKPLQ…ILTLINNQGQ (688 aa)) the chain is on the cytoplasmic side. Disordered stretches follow at residues 789-839 (TTAT…TEAT), 860-967 (KPLG…TDQA), 996-1027 (FFTS…NATP), 1066-1143 (LRGR…EGSE), and 1186-1205 (GSTT…KQLT). The span at 870-885 (IPNSTTNSATLSTIPA) shows a compositional bias: polar residues. A compositionally biased stretch (low complexity) spans 886 to 906 (TLNTTNLPLNSTTKLTTTTST). Residues 933 to 952 (TSDAPDNNSYSDITDYSSEP) show a composition bias toward polar residues. The segment covering 953 to 967 (SEIEDFDEQESTDQA) has biased composition (acidic residues). 3 stretches are compositionally biased toward low complexity: residues 1069–1083 (RITT…STTT), 1091–1100 (RTTTTELTST), and 1107–1130 (TTES…SSST). The helical transmembrane segment at 1309-1329 (VWMGIFFSPGLVLINLVKLMI) threads the bilayer. Residues 1330–1358 (MMYFRSWIVLTCNVPHEVVFKASKSNNFY) lie on the Extracellular side of the membrane. The chain crosses the membrane as a helical span at residues 1359–1379 (LSLLLTMLFLCVLPVGYAIVW). Over 1380–1423 (LRPSWHCGPFSEYNRIAEFITNTTRNALPKQLHEPLDYLTSSST) the chain is Cytoplasmic. A helical transmembrane segment spans residues 1424–1444 (VIPLLLLLILIIYYLVSLTGA). Topologically, residues 1445-2036 (LREANQDLRT…RIDIENEHEK (592 aa)) are extracellular. Disordered regions lie at residues 1527 to 1572 (LRKG…SRLQ), 1592 to 1841 (ERAR…SRQG), and 1859 to 1990 (KKDD…IPTI). Composition is skewed to basic and acidic residues over residues 1538–1566 (SFVR…DKRF), 1614–1640 (KETH…DKKD), 1658–1668 (SPKDNEHDPDT), 1727–1743 (HIVD…EDKP), and 1777–1793 (PEPE…ERSS). Residues 1806–1838 (NEPSGTEEQDRSLPSPTPSQGQGHHQRQLSVLS) show a composition bias toward polar residues. Residues 1890–1899 (VLSSVSSSTA) show a composition bias toward low complexity. Residues 1903–1914 (PPTPEPESPTPS) are compositionally biased toward pro residues. Residues 1976–1990 (QDSQSSIWSDNIPTI) are compositionally biased toward polar residues.

Belongs to the TMC family. Expressed in multi-dendritic neurons of the labellum (md-L), which extend elaborate dendritic arbors innervating the bases of taste hairs (at protein level). In larvae, expressed in class I and class II dendritic arborization (da) neurons and bipolar dendrite (bd) neurons (at protein level). In adults, expressed in various sensory neurons including those in the mouth parts, olfactory neurons in the antenna, wing bristle neurons, haltere neurons, arista neurons, and many other sensory neurons, including a subset of chordotonal (Cho) neurons. Expressed in md-L axon terminals, including those that project into the subesophageal zone (SEZ). Also expressed in a small number of local neurons in the adult ventral nerve cord (VNC), and projections extending from a few neurons in the legs or wing hinges. In the adult mouth, expressed in a few multi-dendritic neurons of the ventral cibarial sensory organ (VCSO); the multiple elaborate dendritic branches form a brush-like structure that faces the luminal side of the food-passing tunnel. Also expressed in the oviduct and uterus of adult females.

Its subcellular location is the cell membrane. The protein localises to the cell projection. The protein resides in the dendrite. In terms of biological role, probable ion channel. Component of mechanosensitive neurons that participates in proprioception, sensing food texture, and directing egg-laying site selection (oviposition). Component of multi-dendritic neurons of the labellum (md-L) where it is required for sensing the hardness and viscosity of their food, enabling them to behaviorally discriminate their preferred softness and smoothness from harder and stickier food options. Required as part of oviposition site selection process to relay mechanosensory and chemosensory information on the hardness and sweetness of potential egg-laying substrates, thus ensuring females select the most optimal site for their eggs survival. Females determine the softest substrate for their eggs first by making a coarse evaluation of substrate hardness using mechanosensitive channels nan and Piezo in the leg tarsal bristles, followed by a much finer assessment using nan, iav and Tmc mechanosensitive channels on the labellum. This protein is required to sense subtle differences in substrate stiffness (between 0.25% and 0.3% agarose), likely acting in the md-L neurons. Also required in neurons on the labellum, including the md-Ls, and possibly in the brain, to inhibit discrimination of egg-laying substrates of different hardness if the substrate contains sucrose. During oviposition evaluation, activation of sweet neurons by sucrose enhances the activity of the Tmc neurons resulting in females losing their softness preference in favor of egg-laying sites that contain sucrose. Acts in the larvae peripheral sensory neurons, to contribute to proprioception and sensory feedback for normal forward crawling behavior. Required for the normal activity of the proprioceptive sensory dendrites, ddaE which show preferential responses to forward locomotion, and ddaD which show preferential responses to backward locomotion. The polypeptide is Transmembrane channel-like protein (Drosophila melanogaster (Fruit fly)).